A 316-amino-acid polypeptide reads, in one-letter code: Probable prolyl 4-hydroxylase 7 (316 aa).

At 1-4 (MDSR) the chain is on the cytoplasmic side. A helical; Signal-anchor for type II membrane protein membrane pass occupies residues 5-24 (IFLAFSLCFLFTLPLISSAP). The Lumenal segment spans residues 25–316 (NRFLTRSSNT…CRKSCKACSS (292 aa)). Residue Asn96 is glycosylated (N-linked (GlcNAc...) asparagine). Residues 139 to 261 (NGESMQILHY…KWSATRWIHV (123 aa)) form the Fe2OG dioxygenase domain. 2 residues coordinate Fe cation: His157 and Asp159. An N-linked (GlcNAc...) asparagine glycan is attached at Asn233. His242 is a binding site for Fe cation. Position 252 (Lys252) interacts with 2-oxoglutarate. One can recognise a ShKT domain in the interval 274 to 314 (CMDENVSCEKWAKAGECQKNPTYMVGSDKDHGYCRKSCKAC). Disulfide bonds link Cys274-Cys314, Cys281-Cys307, and Cys290-Cys311. The N-linked (GlcNAc...) asparagine glycan is linked to Asn278.

Belongs to the P4HA family. It depends on Fe(2+) as a cofactor. L-ascorbate serves as cofactor.

It localises to the endoplasmic reticulum membrane. The enzyme catalyses L-prolyl-[collagen] + 2-oxoglutarate + O2 = trans-4-hydroxy-L-prolyl-[collagen] + succinate + CO2. Its function is as follows. Catalyzes the post-translational formation of 4-hydroxyproline in -Xaa-Pro-Gly- sequences in proline-rich peptide sequences of plant glycoproteins and other proteins. Hydroxyprolines are important constituent of many plant cell wall glycoproteins such as extensins, hydroxyproline-rich glycoproteins, lectins and arabinogalactan proteins. This is Probable prolyl 4-hydroxylase 7 from Arabidopsis thaliana (Mouse-ear cress).